Reading from the N-terminus, the 557-residue chain is Potassium-transporting ATPase potassium-binding subunit (557 aa).

Transmembrane regions (helical) follow at residues 5–25, 63–83, 132–152, 170–190, 253–273, 283–303, 329–349, 356–376, 379–399, 416–436, 484–504, and 526–546; these read GFLL…PLGS, LCAI…MLLG, GLTV…FAFI, LLRI…LFFI, FVQM…FGEV, LLWA…WAEV, VLVS…AVIA, ALGG…FGGV, GLYG…LMIG, LTAL…ALAM, LLAF…MAIA, and LFVG…FIPA.

This sequence belongs to the KdpA family. As to quaternary structure, the system is composed of three essential subunits: KdpA, KdpB and KdpC.

Its subcellular location is the cell inner membrane. In terms of biological role, part of the high-affinity ATP-driven potassium transport (or Kdp) system, which catalyzes the hydrolysis of ATP coupled with the electrogenic transport of potassium into the cytoplasm. This subunit binds the periplasmic potassium ions and delivers the ions to the membrane domain of KdpB through an intramembrane tunnel. This chain is Potassium-transporting ATPase potassium-binding subunit, found in Shigella flexneri.